A 494-amino-acid polypeptide reads, in one-letter code: MATEAQSEGEVPARESGRSDAICSFVICNDSSLRGQPIIFNPDFFVEKLRHEKPEIFTELVVSNITRLIDLPGTELAQLMGEVDLKLPGGAGPASGFFRSLMSLKRKEKGVIFGSPLTEEGIAQIYQLIEYLHKNLRVEGLFRVPGNSVRQQILRDALNNGTDIDLESGEFHSNDVATLLKMFLGELPEPLLTHKHFNAHLKIADLMQFDDKGNKTNIPDKDRQIEALQLLFLILPPPNRNLLKLLLDLLYQTAKKQDKNKMSAYNLALMFAPHVLWPKNVTANDLQENITKLNSGMAFMIKHSQKLFKAPAYIRECARLHYLGSRTQASKDDLDLIASCHTKSFQLAKSQKRNRVDSCPHQEETQHHTEEALRELFQHVHDMPESAKKKQLIRQFNKQSLTQTPGREPSTSQVQKRARSRSFSGLIKRKVLGNQMMSEKKKKNPTPESVAIGELKGTSKENRNLLFSGSPAVTMTPTRLKWSEGKKEGKKGFL.

Alanine 2 bears the N-acetylalanine mark. Serine 7 and serine 31 each carry phosphoserine. The Rho-GAP domain occupies 102–308 (MSLKRKEKGV…FMIKHSQKLF (207 aa)). Disordered regions lie at residues 349–368 (KSQK…TQHH) and 399–421 (QSLT…ARSR). The segment covering 354–368 (NRVDSCPHQEETQHH) has biased composition (basic and acidic residues). A compositionally biased stretch (polar residues) spans 399 to 415 (QSLTQTPGREPSTSQVQ). Phosphoserine occurs at positions 422, 438, and 470. Threonine 478 bears the Phosphothreonine mark.

In terms of tissue distribution, strong expression in fetal heart, brain, placenta, lung, liver, skeletal muscle, kidney and pancreas. Weak expression in adult pancreas, spleen, thymus, and ovary.

It is found in the nucleus. In terms of biological role, GTPase activator for the Rho-type GTPases by converting them to an inactive GDP-bound state. This chain is Rho GTPase-activating protein 19 (ARHGAP19), found in Homo sapiens (Human).